The chain runs to 773 residues: Beta-hexosaminidase B (773 aa).

A signal peptide spans 1–19 (MKFNRLMALLFGVSSPLYA). 3 cysteine pairs are disulfide-bonded: cysteine 46/cysteine 53, cysteine 389/cysteine 397, and cysteine 496/cysteine 542. The Proton donor role is filled by glutamate 531.

It belongs to the glycosyl hydrolase 20 family.

It carries out the reaction Hydrolysis of terminal non-reducing N-acetyl-D-hexosamine residues in N-acetyl-beta-D-hexosaminides.. This is Beta-hexosaminidase B (nag096) from Pseudoalteromonas piscicida.